The chain runs to 428 residues: Cyclin-B1-1 (428 aa).

Belongs to the cyclin family. Cyclin AB subfamily. As to quaternary structure, interacts with FZR2/CCS52A1, FZR1/CCS52A2 and FZR3/CCS52B. In terms of tissue distribution, expressed in root tip, lateral root apex, shoot apex, leaf primordia, axillary buds, stamen and petal primordia, ovules and developing embryo.

Its subcellular location is the nucleus. The chain is Cyclin-B1-1 (CYCB1-1) from Arabidopsis thaliana (Mouse-ear cress).